The sequence spans 529 residues: Mitochondrial inner membrane magnesium transporter MIT1 (529 aa).

2 coiled-coil regions span residues 336–388 (KIQL…LKNE) and 416–450 (LLETHLQLTDELSGELENMEEKITHYEELMRLNLD). Residues 456–476 (FILLNAKISFSTLFCSICAVI) form a helical membrane-spanning segment. Residues 477-492 (TSLFGMNLKNFIEHND) lie on the Mitochondrial intermembrane side of the membrane. Residues 493-513 (YAFFIVSIFITSWSIVGIYFT) traverse the membrane as a helical segment. At 514–529 (KNINTLLRFFDKYNVK) the chain is on the mitochondrial matrix side.

The protein belongs to the CorA metal ion transporter (MIT) (TC 1.A.35) family.

It localises to the mitochondrion inner membrane. Its function is as follows. Mitochondrial inner membrane magnesium transporter required for mitochondrial magnesium homeostasis. Involved in the development of the sporozoite in the mosquito vector midgut. The chain is Mitochondrial inner membrane magnesium transporter MIT1 from Plasmodium falciparum (isolate 3D7).